The chain runs to 478 residues: Histidine--tRNA ligase (478 aa).

The protein belongs to the class-II aminoacyl-tRNA synthetase family. Homodimer.

The protein localises to the cytoplasm. The enzyme catalyses tRNA(His) + L-histidine + ATP = L-histidyl-tRNA(His) + AMP + diphosphate + H(+). The protein is Histidine--tRNA ligase (hisS) of Xanthomonas axonopodis pv. citri (strain 306).